Reading from the N-terminus, the 334-residue chain is Large ribosomal subunit protein uL3 (334 aa).

Positions 1–10 (MGMKKNRPRR) are enriched in basic residues. Residues 1–21 (MGMKKNRPRRGSLAFSPRKRA) form a disordered region.

This sequence belongs to the universal ribosomal protein uL3 family. Part of the 50S ribosomal subunit. Forms a cluster with proteins L14 and L24e.

One of the primary rRNA binding proteins, it binds directly near the 3'-end of the 23S rRNA, where it nucleates assembly of the 50S subunit. The chain is Large ribosomal subunit protein uL3 from Methanococcus maripaludis (strain DSM 14266 / JCM 13030 / NBRC 101832 / S2 / LL).